The chain runs to 880 residues: Xylosyltransferase oxt (880 aa).

The Cytoplasmic portion of the chain corresponds to 1 to 14; the sequence is MEQSVSARWLRRYR. The chain crosses the membrane as a helical; Signal-anchor for type II membrane protein span at residues 15–35; that stretch reads PVLIILVLIFGIQLFLAYKSV. Over 36–880 the chain is Lumenal; it reads DIGGGSGSGL…PKSDVDALLK (845 aa). 4 disulfides stabilise this stretch: cysteine 87/cysteine 115, cysteine 131/cysteine 469, cysteine 488/cysteine 501, and cysteine 490/cysteine 499. Asparagine 135 and asparagine 139 each carry an N-linked (GlcNAc...) asparagine glycan. One can recognise a WSC domain in the interval 138–232; sequence ANVSLGCYRD…FYAMNIYETG (95 aa). Residues aspartate 287 and 316–318 contribute to the UDP-alpha-D-xylose site; that span reads TIW. A glycan (N-linked (GlcNAc...) asparagine) is linked at asparagine 346. 419 to 420 contributes to the UDP-alpha-D-xylose binding site; it reads DW. UDP-alpha-D-xylose-binding positions include serine 502 and 526–527; that span reads RK. 2 N-linked (GlcNAc...) asparagine glycosylation sites follow: asparagine 700 and asparagine 729. The cysteines at positions 846 and 859 are disulfide-linked.

This sequence belongs to the glycosyltransferase 14 family. XylT subfamily. Requires Ca(2+) as cofactor. The cofactor is Mn(2+). It depends on Mg(2+) as a cofactor.

It is found in the endoplasmic reticulum membrane. It localises to the golgi apparatus membrane. It carries out the reaction UDP-alpha-D-xylose + L-seryl-[protein] = 3-O-(beta-D-xylosyl)-L-seryl-[protein] + UDP + H(+). Its pathway is glycan metabolism; chondroitin sulfate biosynthesis. It functions in the pathway glycan metabolism; heparan sulfate biosynthesis. Catalyzes the first step in biosynthesis of glycosaminoglycan. Transfers D-xylose from UDP-D-xylose to specific serine residues of the core protein. The protein is Xylosyltransferase oxt of Drosophila pseudoobscura pseudoobscura (Fruit fly).